The chain runs to 361 residues: Phospho-N-acetylmuramoyl-pentapeptide-transferase (361 aa).

Helical transmembrane passes span Gly27 to Leu47, Thr72 to Ala92, Leu94 to Phe114, Ala133 to Gly153, Leu169 to Gly189, Gly200 to Ser220, Val237 to Phe257, Ile264 to Ala284, Ile289 to Val309, and Gln338 to Leu358.

It belongs to the glycosyltransferase 4 family. MraY subfamily. The cofactor is Mg(2+).

It localises to the cell inner membrane. It catalyses the reaction UDP-N-acetyl-alpha-D-muramoyl-L-alanyl-gamma-D-glutamyl-meso-2,6-diaminopimeloyl-D-alanyl-D-alanine + di-trans,octa-cis-undecaprenyl phosphate = di-trans,octa-cis-undecaprenyl diphospho-N-acetyl-alpha-D-muramoyl-L-alanyl-D-glutamyl-meso-2,6-diaminopimeloyl-D-alanyl-D-alanine + UMP. It functions in the pathway cell wall biogenesis; peptidoglycan biosynthesis. In terms of biological role, catalyzes the initial step of the lipid cycle reactions in the biosynthesis of the cell wall peptidoglycan: transfers peptidoglycan precursor phospho-MurNAc-pentapeptide from UDP-MurNAc-pentapeptide onto the lipid carrier undecaprenyl phosphate, yielding undecaprenyl-pyrophosphoryl-MurNAc-pentapeptide, known as lipid I. This is Phospho-N-acetylmuramoyl-pentapeptide-transferase from Azorhizobium caulinodans (strain ATCC 43989 / DSM 5975 / JCM 20966 / LMG 6465 / NBRC 14845 / NCIMB 13405 / ORS 571).